The primary structure comprises 144 residues: Protein cornichon homolog 1 (144 aa).

The Cytoplasmic segment spans residues 1–10 (MAFTFAAFCY). A helical membrane pass occupies residues 11–31 (MLALLLTAALIFFAIWHIIAF). The Lumenal segment spans residues 32–56 (DELKTDYKNPIDQCNTLNPLVLPEY). Residues 57 to 77 (LIHAFFCVMFLCAAEWLTLGL) traverse the membrane as a helical segment. Residues 78-122 (NMPLLAYHIWRYMSRPVMSGPGLYDPTTIMNADILAYCQKEGWCK) lie on the Cytoplasmic side of the membrane. The helical transmembrane segment at 123–143 (LAFYLLAFFYYLYGMIYVLVS) threads the bilayer. Residue Ser-144 is a topological domain, lumenal.

The protein belongs to the cornichon family. As to quaternary structure, interacts with AREG immature precursor and with immature TGFA, i.e. with a prosegment and lacking full N-glycosylation, but not with the fully N-glycosylated form. In the Golgi apparatus, may form a complex with GORASP55 and transmembrane TGFA.

The protein localises to the endoplasmic reticulum membrane. It is found in the golgi apparatus membrane. Involved in the selective transport and maturation of TGF-alpha family proteins. The chain is Protein cornichon homolog 1 (CNIH1) from Bos taurus (Bovine).